A 41-amino-acid chain; its full sequence is IPQCRDVKESGQPNDKCRCNGKPCTVGKCTIARGDDNDKCT.

Residues R33–D35 carry the Cell attachment site motif.

Belongs to the ornatin family.

Its subcellular location is the secreted. Its function is as follows. Potent inhibitor of fibrinogen interaction with platelet receptors expressed on glycoprotein IIb-IIIa complex. May prevent blood from clotting during either feeding and/or storage of ingested blood. This is Ornatin-A2 from Placobdella ornata (Turtle leech).